Reading from the N-terminus, the 712-residue chain is Envelope glycoprotein gp160 (712 aa).

A signal peptide spans 1 to 24 (MCGRNQLFVASLLASACLIYCVQY). The Extracellular segment spans residues 25-673 (VTVFYGVPVW…LTSWIKYIQY (649 aa)). Residue Asn-36 is glycosylated (N-linked (GlcNAc...) asparagine; by host). A disulfide bridge connects residues Cys-43 and Cys-56. 25 N-linked (GlcNAc...) asparagine; by host glycosylation sites follow: Asn-69, Asn-78, Asn-113, Asn-119, Asn-131, Asn-137, Asn-145, Asn-160, Asn-173, Asn-200, Asn-232, Asn-235, Asn-242, Asn-266, Asn-272, Asn-283, Asn-294, Asn-304, Asn-359, Asn-392, Asn-402, Asn-405, Asn-442, Asn-457, and Asn-460. Cystine bridges form between Cys-100/Cys-208, Cys-107/Cys-199, Cys-112/Cys-157, Cys-221/Cys-251, and Cys-231/Cys-243. The tract at residues 112–156 (CNSTTAKNTTSTPTTTTTANTTIGENSSCIRTDNCTGLGEEEMVD) is V1. The segment at 157–199 (CQFNMTGLERDKKKLYNETWYSKDVVCESKDTKKEKTCYMNHC) is V2. Residues 299–331 (CKRPGNKTVVPITLMSGLVFHSQPINRRPRQAW) form a V3 region. Cys-299 and Cys-332 are joined by a disulfide. Intrachain disulfides connect Cys-384–Cys-441 and Cys-391–Cys-414. Residues 391 to 414 (CNMTWFLNWVENRTNQTQHNYVPC) form a V4 region. The V5 stretch occupies residues 457 to 463 (NQTNITF). Positions 506–526 (GVFVLGFLGFLTTAGAAMGAA) are fusion peptide. Residues 569–585 (LQARVTAIEKYLKDQAQ) form an immunosuppression region. 3 N-linked (GlcNAc...) asparagine; by host glycosylation sites follow: Asn-605, Asn-614, and Asn-630. Residues 614–646 (NITWQEWEQRIRNLEANISESLEQAQIQQEKNM) adopt a coiled-coil conformation. The interval 651 to 672 (KLNSWDVFSNWFDLTSWIKYIQ) is MPER; binding to GalCer. A helical transmembrane segment spans residues 674-694 (GVYIVVGIIVLRMVIYVVQML). At 695-712 (SRLRKGYRPVFSSPPAYS) the chain is on the cytoplasmic side. A YXXV motif; contains endocytosis signal motif is present at residues 701–704 (YRPV).

In terms of assembly, the mature envelope protein (Env) consists of a homotrimer of non-covalently associated gp120-gp41 heterodimers. The resulting complex protrudes from the virus surface as a spike. There seems to be as few as 10 spikes on the average virion. Interacts with human CD4, CCR5 and CXCR4, to form a P4HB/PDI-CD4-CXCR4-gp120 complex. Gp120 also interacts with the C-type lectins CD209/DC-SIGN and CLEC4M/DC-SIGNR (collectively referred to as DC-SIGN(R)). Gp120 and gp41 interact with GalCer. The mature envelope protein (Env) consists of a homotrimer of non-covalently associated gp120-gp41 heterodimers. The resulting complex protrudes from the virus surface as a spike. There seems to be as few as 10 spikes on the average virion. Post-translationally, specific enzymatic cleavages in vivo yield mature proteins. Envelope glycoproteins are synthesized as an inactive precursor that is heavily N-glycosylated and processed likely by host cell furin in the Golgi to yield the mature SU and TM proteins. The cleavage site between SU and TM requires the minimal sequence [KR]-X-[KR]-R.

Its subcellular location is the virion membrane. The protein localises to the host cell membrane. It is found in the host endosome membrane. In terms of biological role, the surface protein gp120 (SU) attaches the virus to the host lymphoid cell by binding to the primary receptor CD4. This interaction induces a structural rearrangement creating a high affinity binding site for a chemokine coreceptor like CXCR4 and/or CCR5. This peculiar 2 stage receptor-interaction strategy allows gp120 to maintain the highly conserved coreceptor-binding site in a cryptic conformation, protected from neutralizing antibodies. Since CD4 also displays a binding site for the disulfide-isomerase P4HB/PDI, a P4HB/PDI-CD4-CXCR4-gp120 complex may form. In that complex, P4HB/PDI could reach and reduce gp120 disulfide bonds, causing major conformational changes in gp120. TXN, another PDI family member could also be involved in disulfide rearrangements in Env during fusion. These changes are transmitted to the transmembrane protein gp41 and are thought to activate its fusogenic potential by unmasking its fusion peptide. The surface protein gp120 is a ligand for CD209/DC-SIGN and CLEC4M/DC-SIGNR, which are respectively found on dendritic cells (DCs), and on endothelial cells of liver sinusoids and lymph node sinuses. These interactions allow capture of viral particles at mucosal surfaces by these cells and subsequent transmission to permissive cells. DCs are professional antigen presenting cells, critical for host immunity by inducing specific immune responses against a broad variety of pathogens. They act as sentinels in various tissues where they take up antigen, process it, and present it to T-cells following migration to lymphoid organs. HIV subverts the migration properties of dendritic cells to gain access to CD4+ T-cells in lymph nodes. Virus transmission to permissive T-cells occurs either in trans (without DCs infection, through viral capture and transmission), or in cis (following DCs productive infection, through the usual CD4-gp120 interaction), thereby inducing a robust infection. In trans infection, bound virions remain infectious over days and it is proposed that they are not degraded, but protected in non-lysosomal acidic organelles within the DCs close to the cell membrane thus contributing to the viral infectious potential during DCs' migration from the periphery to the lymphoid tissues. On arrival at lymphoid tissues, intact virions recycle back to DCs' cell surface allowing virus transmission to CD4+ T-cells. Virion capture also seems to lead to MHC-II-restricted viral antigen presentation, and probably to the activation of HIV-specific CD4+ cells. Functionally, the transmembrane protein gp41 (TM) acts as a class I viral fusion protein. Under the current model, the protein has at least 3 conformational states: pre-fusion native state, pre-hairpin intermediate state, and post-fusion hairpin state. During fusion of viral and target intracellular membranes, the coiled coil regions (heptad repeats) assume a trimer-of-hairpins structure, positioning the fusion peptide in close proximity to the C-terminal region of the ectodomain. The formation of this structure appears to drive apposition and subsequent fusion of viral and target cell membranes. Complete fusion occurs in host cell endosomes and is dynamin-dependent, however some lipid transfer might occur at the plasma membrane. The virus undergoes clathrin-dependent internalization long before endosomal fusion, thus minimizing the surface exposure of conserved viral epitopes during fusion and reducing the efficacy of inhibitors targeting these epitopes. Membranes fusion leads to delivery of the nucleocapsid into the cytoplasm. Its function is as follows. The envelope glycoprotein gp160 precursor down-modulates cell surface CD4 antigen by interacting with it in the endoplasmic reticulum and blocking its transport to the cell surface. In terms of biological role, the gp120-gp41 heterodimer seems to contribute to T-cell depletion during HIV-1 infection. The envelope glycoproteins expressed on the surface of infected cells induce apoptosis through an interaction with uninfected cells expressing the receptor (CD4) and the coreceptors CXCR4 or CCR5. This type of bystander killing may be obtained by at least three distinct mechanisms. First, the interaction between the 2 cells can induce cellular fusion followed by nuclear fusion within the syncytium. Syncytia are condemned to die from apoptosis. Second, the 2 interacting cells may not fuse entirely and simply exchange plasma membrane lipids, after a sort of hemifusion process, followed by rapid death. Third, it is possible that virus-infected cells, on the point of undergoing apoptosis, fuse with CD4-expressing cells, in which case apoptosis is rapidly transmitted from one cell to the other and thus occurs in a sort of contagious fashion. The gp120-gp41 heterodimer allows rapid transcytosis of the virus through CD4 negative cells such as simple epithelial monolayers of the intestinal, rectal and endocervical epithelial barriers. Both gp120 and gp41 specifically recognize glycosphingolipids galactosyl-ceramide (GalCer) or 3' sulfo-galactosyl-ceramide (GalS) present in the lipid rafts structures of epithelial cells. Binding to these alternative receptors allows the rapid transcytosis of the virus through the epithelial cells. This transcytotic vesicle-mediated transport of virions from the apical side to the basolateral side of the epithelial cells does not involve infection of the cells themselves. This chain is Envelope glycoprotein gp160 (env), found in Homo sapiens (Human).